A 358-amino-acid chain; its full sequence is Methionine aminopeptidase 2 (358 aa).

Residue His109 participates in substrate binding. Positions 130, 141, and 210 each coordinate a divalent metal cation. His218 is a binding site for substrate. A divalent metal cation contacts are provided by Glu243 and Glu339.

It belongs to the peptidase M24A family. Methionine aminopeptidase eukaryotic type 2 subfamily. Co(2+) serves as cofactor. Zn(2+) is required as a cofactor. It depends on Mn(2+) as a cofactor. The cofactor is Fe(2+).

It is found in the cytoplasm. The catalysed reaction is Release of N-terminal amino acids, preferentially methionine, from peptides and arylamides.. In terms of biological role, cotranslationally removes the N-terminal methionine from nascent proteins. The N-terminal methionine is often cleaved when the second residue in the primary sequence is small and uncharged (Met-Ala-, Cys, Gly, Pro, Ser, Thr, or Val). The polypeptide is Methionine aminopeptidase 2 (Encephalitozoon intestinalis (strain ATCC 50506) (Microsporidian parasite)).